Reading from the N-terminus, the 157-residue chain is Ribosome maturation factor RimP (157 aa).

The protein belongs to the RimP family.

It is found in the cytoplasm. Functionally, required for maturation of 30S ribosomal subunits. In Geobacillus sp. (strain WCH70), this protein is Ribosome maturation factor RimP.